The sequence spans 115 residues: Nucleoid-associated protein Pro_0020 (115 aa).

It belongs to the YbaB/EbfC family. As to quaternary structure, homodimer.

It localises to the cytoplasm. It is found in the nucleoid. Binds to DNA and alters its conformation. May be involved in regulation of gene expression, nucleoid organization and DNA protection. The chain is Nucleoid-associated protein Pro_0020 from Prochlorococcus marinus (strain SARG / CCMP1375 / SS120).